Consider the following 573-residue polypeptide: Sulfite oxidase, mitochondrial (573 aa).

The N-terminal 34 residues, 1–34 (MRLLRPSWAGLLRGRHHQHQRHHRRLLLTTSRGS), are a transit peptide targeting the mitochondrion. The span at 14 to 26 (GRHHQHQRHHRRL) shows a compositional bias: basic residues. Positions 14–50 (GRHHQHQRHHRRLLLTTSRGSNGEREEQQHSQWSSPG) are disordered. A Cytochrome b5 heme-binding domain is found at 108-186 (LPTYRAEEVE…LEGFRIGNLE (79 aa)). Residues histidine 144 and histidine 168 each contribute to the heme b site. Residues 190 to 199 (VTNVDDELGS) form a hinge region. The interval 200 to 423 (PWSQEPQRHA…DSHWQQNDYK (224 aa)) is moco domain. Mo-molybdopterin is bound by residues 240–244 (YVRNH), cysteine 287, aspartate 344, histidine 383, arginine 388, and 399–401 (NVK). Residues 424–567 (GFSPSTDWDT…RGVLANAYHK (144 aa)) form a homodimerization region.

The cofactor is heme b. Mo-molybdopterin serves as cofactor. As to expression, expressed in the ensheathing glia with relatively weak expression in the CNS cortex (at protein level).

Its subcellular location is the mitochondrion intermembrane space. The enzyme catalyses sulfite + O2 + H2O = sulfate + H2O2. The protein operates within energy metabolism; sulfur metabolism. Required in ensheathing glial cells for normal larval locomotion. Oxidizes sulfite which is required to maintain glutamate homeostasis and as a consequence, neuronal network function. This chain is Sulfite oxidase, mitochondrial, found in Drosophila melanogaster (Fruit fly).